The primary structure comprises 347 residues: Phenylalanine--tRNA ligase alpha subunit (347 aa).

Glu261 provides a ligand contact to Mg(2+).

Belongs to the class-II aminoacyl-tRNA synthetase family. Phe-tRNA synthetase alpha subunit type 1 subfamily. In terms of assembly, tetramer of two alpha and two beta subunits. Mg(2+) is required as a cofactor.

The protein resides in the cytoplasm. The enzyme catalyses tRNA(Phe) + L-phenylalanine + ATP = L-phenylalanyl-tRNA(Phe) + AMP + diphosphate + H(+). The chain is Phenylalanine--tRNA ligase alpha subunit from Streptococcus mutans serotype c (strain ATCC 700610 / UA159).